Consider the following 539-residue polypeptide: Eukaryotic translation initiation factor 3 subunit L (539 aa).

Positions Thr306–His514 constitute a PCI domain.

It belongs to the eIF-3 subunit L family. Component of the eukaryotic translation initiation factor 3 (eIF-3) complex. The eIF-3 complex interacts with pix.

The protein localises to the cytoplasm. Its function is as follows. Component of the eukaryotic translation initiation factor 3 (eIF-3) complex, which is involved in protein synthesis of a specialized repertoire of mRNAs and, together with other initiation factors, stimulates binding of mRNA and methionyl-tRNAi to the 40S ribosome. The eIF-3 complex specifically targets and initiates translation of a subset of mRNAs involved in cell proliferation. In Drosophila ananassae (Fruit fly), this protein is Eukaryotic translation initiation factor 3 subunit L.